The following is a 259-amino-acid chain: uncharacterized protein (259 aa).

The protein belongs to the ParA family.

This is an uncharacterized protein from Methanocaldococcus jannaschii (strain ATCC 43067 / DSM 2661 / JAL-1 / JCM 10045 / NBRC 100440) (Methanococcus jannaschii).